The chain runs to 475 residues: MSPQTETKASVGFKAGVKEYKLTYYTPEYETKDTDILAAFRVTPQPGVPPEEAGAAVAAESSTGTWTTVWTDGLTSLDRYKGRCYHIEPVPGEEDQFIAYVAYPLDLFEEGSVTNMFTSIVGNVFGFKALRALRLEDLRIPIAYVKTFEGPPHGIQVERDKLNKYGRPLLGCTIKPKLGLSAKNYGRACYECLRGGLDFTKDDENVNSQPFMRWRDRFLFCAEAIYKAQAETGEIKGHYLNATAGNCEEMIKRAVFARELGVPIVMHDYLTGGFTANTSLSHYCRDNGLLLHIHRAMHAVIDRQKNHGMHFRVLAKALRMSGGDHIHSGTVVGKLEGERDITLGFVDLLRDDYIEKDRSRGIYFTQDWVSMPGVLPVRSGGIHVWHMPALTDIFGDDSVLQFGGGTLGHPWGNAPGAVANRVALEACVKARNEGRNLASEGNEIIREAAKWSPELAAACEVWKEIKFIFAAVDTL.

A propeptide spanning residues 1 to 2 (MS) is cleaved from the precursor. Residue P3 is modified to N-acetylproline. K14 is modified (N6,N6,N6-trimethyllysine). Residues N123 and T173 each contribute to the substrate site. The active-site Proton acceptor is K175. K177 is a binding site for substrate. K201, D203, and E204 together coordinate Mg(2+). Position 201 is an N6-carboxylysine (K201). H294 functions as the Proton acceptor in the catalytic mechanism. R295, H327, and S379 together coordinate substrate.

The protein belongs to the RuBisCO large chain family. Type I subfamily. As to quaternary structure, heterohexadecamer of 8 large chains and 8 small chains; disulfide-linked. The disulfide link is formed within the large subunit homodimers. It depends on Mg(2+) as a cofactor. Post-translationally, the disulfide bond which can form in the large chain dimeric partners within the hexadecamer appears to be associated with oxidative stress and protein turnover.

It localises to the plastid. It is found in the chloroplast. The enzyme catalyses 2 (2R)-3-phosphoglycerate + 2 H(+) = D-ribulose 1,5-bisphosphate + CO2 + H2O. The catalysed reaction is D-ribulose 1,5-bisphosphate + O2 = 2-phosphoglycolate + (2R)-3-phosphoglycerate + 2 H(+). Its function is as follows. RuBisCO catalyzes two reactions: the carboxylation of D-ribulose 1,5-bisphosphate, the primary event in carbon dioxide fixation, as well as the oxidative fragmentation of the pentose substrate in the photorespiration process. Both reactions occur simultaneously and in competition at the same active site. This chain is Ribulose bisphosphate carboxylase large chain, found in Bouvardia ternifolia (Firecrackerbush).